The following is a 167-amino-acid chain: Crossover junction endodeoxyribonuclease RuvC (167 aa).

Active-site residues include aspartate 11, glutamate 71, and aspartate 143. Mg(2+)-binding residues include aspartate 11, glutamate 71, and aspartate 143.

This sequence belongs to the RuvC family. As to quaternary structure, homodimer which binds Holliday junction (HJ) DNA. The HJ becomes 2-fold symmetrical on binding to RuvC with unstacked arms; it has a different conformation from HJ DNA in complex with RuvA. In the full resolvosome a probable DNA-RuvA(4)-RuvB(12)-RuvC(2) complex forms which resolves the HJ. Requires Mg(2+) as cofactor.

The protein localises to the cytoplasm. The catalysed reaction is Endonucleolytic cleavage at a junction such as a reciprocal single-stranded crossover between two homologous DNA duplexes (Holliday junction).. Functionally, the RuvA-RuvB-RuvC complex processes Holliday junction (HJ) DNA during genetic recombination and DNA repair. Endonuclease that resolves HJ intermediates. Cleaves cruciform DNA by making single-stranded nicks across the HJ at symmetrical positions within the homologous arms, yielding a 5'-phosphate and a 3'-hydroxyl group; requires a central core of homology in the junction. The consensus cleavage sequence is 5'-(A/T)TT(C/G)-3'. Cleavage occurs on the 3'-side of the TT dinucleotide at the point of strand exchange. HJ branch migration catalyzed by RuvA-RuvB allows RuvC to scan DNA until it finds its consensus sequence, where it cleaves and resolves the cruciform DNA. The protein is Crossover junction endodeoxyribonuclease RuvC of Hyphomonas neptunium (strain ATCC 15444).